Here is a 197-residue protein sequence, read N- to C-terminus: MAATPRGTSPVPPDARPRLTVLSGPSGVGKSTVVAHMRKEHPEVWLSVSATTRRPRPGEQHGVHYFFVSDEEMDKLIANGELLEWAEFAGNRYGTPRTAVLERLEAGEPVLLEIDLQGARQVRESMPEARLVFLAPPSWDELVRRLTGRGTEPPEVIERRLAAAKVELAAEPEFDQTLVNTSVEDVARELLALTNVV.

Residues 1-30 form a disordered region; it reads MAATPRGTSPVPPDARPRLTVLSGPSGVGK. The region spanning 17-197 is the Guanylate kinase-like domain; the sequence is PRLTVLSGPS…RELLALTNVV (181 aa). ATP is bound at residue 24-31; that stretch reads GPSGVGKS.

Belongs to the guanylate kinase family.

The protein localises to the cytoplasm. It catalyses the reaction GMP + ATP = GDP + ADP. Essential for recycling GMP and indirectly, cGMP. The protein is Guanylate kinase (gmk) of Streptomyces coelicolor (strain ATCC BAA-471 / A3(2) / M145).